The primary structure comprises 443 residues: Trimethylamine monooxygenase (443 aa).

FAD contacts are provided by D37, Q39, L45, and W46. The NADP(+) site is built by W70 and N72. Residues N72 and V125 each contribute to the FAD site. Residues Y170, S202, S203, S205, and R226 each contribute to the NADP(+) site. 2 residues coordinate FAD: Q315 and T318. Residue R409 coordinates NADP(+).

This sequence belongs to the FMO family. The cofactor is FAD.

The enzyme catalyses trimethylamine + NADPH + O2 = trimethylamine N-oxide + NADP(+) + H2O. Its function is as follows. Catalyzes the oxidation of trimethylamine (TMA) to produce trimethylamine N-oxide (TMAO). In vitro, has a broad substrate specificity, oxidizing many nitrogen- and sulfur-containing compounds, including dimethylamine (DMA), dimethylsulfide (DMS) and dimethylsulfoxide (DMSO). This is Trimethylamine monooxygenase from Pelagibacter ubique (strain HTCC1002).